The sequence spans 144 residues: Maximins 4/H3 type 1 (144 aa).

The signal sequence occupies residues 1–18 (MNFKYIIAVSFFIASAYA). Residues 19–43 (RSEEKDVQSLSQRDVLEEESLREIR) constitute a propeptide that is removed on maturation. Asparagine amide is present on Asn70. Residues 74–123 (TAEDHEVMKRLEAVMRDLDSLDHPEEASERETRGFNQEEIANLFTKKEKR) constitute a propeptide that is removed on maturation. Ile143 is subject to Isoleucine amide.

This sequence belongs to the bombinin family. As to expression, expressed by the skin glands.

It is found in the secreted. In terms of biological role, maximin-4 shows antibacterial activity against both Gram-positive and Gram-negative bacteria. It also shows antimicrobial activity against the fungus C.albicans, but not against A.flavus nor P.uticale. It has little hemolytic activity. It does not possess a significant cytotoxicity against tumor cell lines. It does not possess a significant anti-HIV activity. Maximin-H3 shows antibacterial activity against both Gram-positive and Gram-negative bacteria. It also shows antimicrobial activity against the fungus C.albicans. Shows strong hemolytic activity. The sequence is that of Maximins 4/H3 type 1 from Bombina maxima (Giant fire-bellied toad).